A 114-amino-acid chain; its full sequence is NADH-ubiquinone oxidoreductase chain 3 (114 aa).

3 helical membrane passes run Leu-4 to Leu-24, Phe-55 to Phe-75, and Val-82 to Ile-102.

Belongs to the complex I subunit 3 family.

It is found in the mitochondrion membrane. The enzyme catalyses a ubiquinone + NADH + 5 H(+)(in) = a ubiquinol + NAD(+) + 4 H(+)(out). Functionally, core subunit of the mitochondrial membrane respiratory chain NADH dehydrogenase (Complex I) that is believed to belong to the minimal assembly required for catalysis. Complex I functions in the transfer of electrons from NADH to the respiratory chain. The immediate electron acceptor for the enzyme is believed to be ubiquinone. The sequence is that of NADH-ubiquinone oxidoreductase chain 3 (ND3) from Allomyces macrogynus.